The sequence spans 246 residues: Pyridoxine 5'-phosphate synthase (246 aa).

Asparagine 10 is a 3-amino-2-oxopropyl phosphate binding site. 12–13 (DH) is a 1-deoxy-D-xylulose 5-phosphate binding site. Arginine 21 serves as a coordination point for 3-amino-2-oxopropyl phosphate. Residue histidine 46 is the Proton acceptor of the active site. Residues arginine 48 and histidine 53 each contribute to the 1-deoxy-D-xylulose 5-phosphate site. Glutamate 73 serves as the catalytic Proton acceptor. 1-deoxy-D-xylulose 5-phosphate is bound at residue threonine 103. Histidine 193 acts as the Proton donor in catalysis. Residues glycine 194 and 215–216 (GH) contribute to the 3-amino-2-oxopropyl phosphate site.

This sequence belongs to the PNP synthase family. Homooctamer; tetramer of dimers.

The protein localises to the cytoplasm. It catalyses the reaction 3-amino-2-oxopropyl phosphate + 1-deoxy-D-xylulose 5-phosphate = pyridoxine 5'-phosphate + phosphate + 2 H2O + H(+). It functions in the pathway cofactor biosynthesis; pyridoxine 5'-phosphate biosynthesis; pyridoxine 5'-phosphate from D-erythrose 4-phosphate: step 5/5. Catalyzes the complicated ring closure reaction between the two acyclic compounds 1-deoxy-D-xylulose-5-phosphate (DXP) and 3-amino-2-oxopropyl phosphate (1-amino-acetone-3-phosphate or AAP) to form pyridoxine 5'-phosphate (PNP) and inorganic phosphate. In Rhodopirellula baltica (strain DSM 10527 / NCIMB 13988 / SH1), this protein is Pyridoxine 5'-phosphate synthase.